The chain runs to 272 residues: Orotidine 5'-phosphate decarboxylase (272 aa).

Catalysis depends on K96, which acts as the Proton donor.

Belongs to the OMP decarboxylase family. Type 2 subfamily.

It catalyses the reaction orotidine 5'-phosphate + H(+) = UMP + CO2. It functions in the pathway pyrimidine metabolism; UMP biosynthesis via de novo pathway; UMP from orotate: step 2/2. This is Orotidine 5'-phosphate decarboxylase from Christiangramia forsetii (strain DSM 17595 / CGMCC 1.15422 / KT0803) (Gramella forsetii).